The sequence spans 223 residues: Large ribosomal subunit protein uL3 (223 aa).

It belongs to the universal ribosomal protein uL3 family. As to quaternary structure, part of the 50S ribosomal subunit. Forms a cluster with proteins L14 and L19.

Functionally, one of the primary rRNA binding proteins, it binds directly near the 3'-end of the 23S rRNA, where it nucleates assembly of the 50S subunit. This is Large ribosomal subunit protein uL3 from Cutibacterium acnes (strain DSM 16379 / KPA171202) (Propionibacterium acnes).